The primary structure comprises 179 residues: ATP synthase subunit delta (179 aa).

The protein belongs to the ATPase delta chain family. As to quaternary structure, F-type ATPases have 2 components, F(1) - the catalytic core - and F(0) - the membrane proton channel. F(1) has five subunits: alpha(3), beta(3), gamma(1), delta(1), epsilon(1). F(0) has three main subunits: a(1), b(2) and c(10-14). The alpha and beta chains form an alternating ring which encloses part of the gamma chain. F(1) is attached to F(0) by a central stalk formed by the gamma and epsilon chains, while a peripheral stalk is formed by the delta and b chains.

Its subcellular location is the cell inner membrane. Functionally, f(1)F(0) ATP synthase produces ATP from ADP in the presence of a proton or sodium gradient. F-type ATPases consist of two structural domains, F(1) containing the extramembraneous catalytic core and F(0) containing the membrane proton channel, linked together by a central stalk and a peripheral stalk. During catalysis, ATP synthesis in the catalytic domain of F(1) is coupled via a rotary mechanism of the central stalk subunits to proton translocation. In terms of biological role, this protein is part of the stalk that links CF(0) to CF(1). It either transmits conformational changes from CF(0) to CF(1) or is implicated in proton conduction. In Anaeromyxobacter dehalogenans (strain 2CP-C), this protein is ATP synthase subunit delta.